The following is a 237-amino-acid chain: MSQLNVDLQEIAKFEALAAKWWDQHSEFRPLHQINPLRLNWIDERAGGLAGKKVLDVGCGGGILAESMARRGADVLGIDMGEAPLAVGRLHAQQENVQNIEYRQIPVEELAQEQAGQYDVVTCMEMMEHVPDPASIVKACQTLVKPGGHVFFSTINRNPKSYLFAIIGAEYVLRMLPKGTHDYHKFIRPSEMAHDIRNAGLTLKEMTGLHYNPITKRYWLAPNVDVNYMVHTVKTGA.

Arginine 38, glycine 58, aspartate 79, and methionine 124 together coordinate S-adenosyl-L-methionine.

It belongs to the methyltransferase superfamily. UbiG/COQ3 family.

It carries out the reaction a 3-demethylubiquinol + S-adenosyl-L-methionine = a ubiquinol + S-adenosyl-L-homocysteine + H(+). It catalyses the reaction a 3-(all-trans-polyprenyl)benzene-1,2-diol + S-adenosyl-L-methionine = a 2-methoxy-6-(all-trans-polyprenyl)phenol + S-adenosyl-L-homocysteine + H(+). The protein operates within cofactor biosynthesis; ubiquinone biosynthesis. Functionally, O-methyltransferase that catalyzes the 2 O-methylation steps in the ubiquinone biosynthetic pathway. The chain is Ubiquinone biosynthesis O-methyltransferase from Acinetobacter baumannii (strain AB307-0294).